A 629-amino-acid chain; its full sequence is tRNA uridine 5-carboxymethylaminomethyl modification enzyme MnmG (629 aa).

Residue 11–16 (GGGHAG) participates in FAD binding. 273-287 (GPRYCPSFEDKVVRF) is an NAD(+) binding site.

It belongs to the MnmG family. As to quaternary structure, homodimer. Heterotetramer of two MnmE and two MnmG subunits. FAD serves as cofactor.

The protein localises to the cytoplasm. NAD-binding protein involved in the addition of a carboxymethylaminomethyl (cmnm) group at the wobble position (U34) of certain tRNAs, forming tRNA-cmnm(5)s(2)U34. The polypeptide is tRNA uridine 5-carboxymethylaminomethyl modification enzyme MnmG (Mycoplasma capricolum subsp. capricolum (strain California kid / ATCC 27343 / NCTC 10154)).